A 545-amino-acid polypeptide reads, in one-letter code: DNA mismatch repair protein MutL (545 aa).

Residues Arg517 to Pro545 form a disordered region.

The protein belongs to the DNA mismatch repair MutL/HexB family.

This protein is involved in the repair of mismatches in DNA. It is required for dam-dependent methyl-directed DNA mismatch repair. May act as a 'molecular matchmaker', a protein that promotes the formation of a stable complex between two or more DNA-binding proteins in an ATP-dependent manner without itself being part of a final effector complex. The protein is DNA mismatch repair protein MutL of Thermus thermophilus (strain ATCC 27634 / DSM 579 / HB8).